Here is a 340-residue protein sequence, read N- to C-terminus: uncharacterized protein (340 aa).

The chain crosses the membrane as a helical span at residues 6-26 (ITFGLLVLMVCVILFVLYVQL).

It is found in the cell membrane. This is an uncharacterized protein from Bacillus subtilis (strain 168).